The sequence spans 521 residues: DNA damage-binding protein cmr1 (521 aa).

A disordered region spans residues 36-75 (DKIIPKPAPPKPKRASTPRVKREPVKKEAARPTRQSSRLA). Basic and acidic residues predominate over residues 55-66 (VKREPVKKEAAR). WD repeat units follow at residues 183–224 (IVPQ…PKIE), 242–282 (THSR…STEI), 333–373 (LTDH…GKGD), 382–422 (EHES…EWKA), and 490–521 (DGIT…CLWM).

It belongs to the WD repeat DDB2/WDR76 family.

In terms of biological role, DNA-binding protein that binds to both single- and double-stranded DNA. Binds preferentially to UV-damaged DNA. May be involved in DNA-metabolic processes. The chain is DNA damage-binding protein cmr1 from Neurospora crassa (strain ATCC 24698 / 74-OR23-1A / CBS 708.71 / DSM 1257 / FGSC 987).